Here is a 359-residue protein sequence, read N- to C-terminus: Histidinol-phosphate aminotransferase (359 aa).

The residue at position 217 (Lys217) is an N6-(pyridoxal phosphate)lysine.

It belongs to the class-II pyridoxal-phosphate-dependent aminotransferase family. Histidinol-phosphate aminotransferase subfamily. In terms of assembly, homodimer. Requires pyridoxal 5'-phosphate as cofactor.

The catalysed reaction is L-histidinol phosphate + 2-oxoglutarate = 3-(imidazol-4-yl)-2-oxopropyl phosphate + L-glutamate. Its pathway is amino-acid biosynthesis; L-histidine biosynthesis; L-histidine from 5-phospho-alpha-D-ribose 1-diphosphate: step 7/9. The chain is Histidinol-phosphate aminotransferase from Salmonella enteritidis PT4 (strain P125109).